The sequence spans 371 residues: uncharacterized protein (371 aa).

Belongs to the Gfo/Idh/MocA family.

This is an uncharacterized protein from Synechocystis sp. (strain ATCC 27184 / PCC 6803 / Kazusa).